Consider the following 156-residue polypeptide: Small ribosomal subunit protein uS7 (156 aa).

This sequence belongs to the universal ribosomal protein uS7 family. In terms of assembly, part of the 30S ribosomal subunit. Contacts proteins S9 and S11.

In terms of biological role, one of the primary rRNA binding proteins, it binds directly to 16S rRNA where it nucleates assembly of the head domain of the 30S subunit. Is located at the subunit interface close to the decoding center, probably blocks exit of the E-site tRNA. The sequence is that of Small ribosomal subunit protein uS7 from Acaryochloris marina (strain MBIC 11017).